The primary structure comprises 356 residues: Histidinol-phosphate aminotransferase (356 aa).

K214 is modified (N6-(pyridoxal phosphate)lysine).

Belongs to the class-II pyridoxal-phosphate-dependent aminotransferase family. Histidinol-phosphate aminotransferase subfamily. In terms of assembly, homodimer. It depends on pyridoxal 5'-phosphate as a cofactor.

The enzyme catalyses L-histidinol phosphate + 2-oxoglutarate = 3-(imidazol-4-yl)-2-oxopropyl phosphate + L-glutamate. It participates in amino-acid biosynthesis; L-histidine biosynthesis; L-histidine from 5-phospho-alpha-D-ribose 1-diphosphate: step 7/9. This Escherichia coli O45:K1 (strain S88 / ExPEC) protein is Histidinol-phosphate aminotransferase.